A 395-amino-acid polypeptide reads, in one-letter code: Na(+)/H(+) antiporter NhaA (395 aa).

A run of 12 helical transmembrane segments spans residues 18–38, 64–84, 100–120, 129–149, 160–180, 182–202, 205–225, 226–246, 266–286, 295–315, 333–353, and 368–388; these read AGGI…NSPL, LLMW…GLEV, IFPA…YWLV, GGWA…LVLL, FLLA…ALFF, HDLS…LILL, FKVS…VSVL, KSGV…PLKG, FLIL…GLGM, LGVT…FSYL, IFAV…LASL, and LGIL…LFVT.

Belongs to the NhaA Na(+)/H(+) (TC 2.A.33) antiporter family.

The protein resides in the cell inner membrane. It catalyses the reaction Na(+)(in) + 2 H(+)(out) = Na(+)(out) + 2 H(+)(in). Na(+)/H(+) antiporter that extrudes sodium in exchange for external protons. The chain is Na(+)/H(+) antiporter NhaA from Histophilus somni (strain 129Pt) (Haemophilus somnus).